The sequence spans 294 residues: Undecaprenyl-diphosphatase (294 aa).

6 helical membrane passes run 39–59 (PGAAFTAIIQIGTELAVILYF), 93–113 (ATLGWNIIVGSIPIIILGFTL), 123–143 (NLWITVTVLLVFGILLWMVDA), 198–218 (SFLMAIPAVFGSGLLEAIKAV), 232–252 (PTLVAMVISFVLGYIVIIGFL), and 268–288 (IGLAVVVALLLIVGVLPAIDP).

It belongs to the UppP family.

The protein localises to the cell membrane. It catalyses the reaction di-trans,octa-cis-undecaprenyl diphosphate + H2O = di-trans,octa-cis-undecaprenyl phosphate + phosphate + H(+). Its function is as follows. Catalyzes the dephosphorylation of undecaprenyl diphosphate (UPP). Confers resistance to bacitracin. The sequence is that of Undecaprenyl-diphosphatase from Bifidobacterium longum (strain DJO10A).